A 138-amino-acid chain; its full sequence is Nucleoside diphosphate kinase (138 aa).

ATP contacts are provided by Lys9, Phe57, Arg85, Thr91, Arg102, and Asn112. Residue His115 is the Pros-phosphohistidine intermediate of the active site.

This sequence belongs to the NDK family. Requires Mg(2+) as cofactor.

It is found in the cytoplasm. The catalysed reaction is a 2'-deoxyribonucleoside 5'-diphosphate + ATP = a 2'-deoxyribonucleoside 5'-triphosphate + ADP. The enzyme catalyses a ribonucleoside 5'-diphosphate + ATP = a ribonucleoside 5'-triphosphate + ADP. Functionally, major role in the synthesis of nucleoside triphosphates other than ATP. The ATP gamma phosphate is transferred to the NDP beta phosphate via a ping-pong mechanism, using a phosphorylated active-site intermediate. The polypeptide is Nucleoside diphosphate kinase (Picrophilus torridus (strain ATCC 700027 / DSM 9790 / JCM 10055 / NBRC 100828 / KAW 2/3)).